The sequence spans 255 residues: Proteasome subunit alpha (255 aa).

Polar residues predominate over residues 190–201 (PSTSGASGNGET). Residues 190-255 (PSTSGASGNG…DKSSGDGEQN (66 aa)) are disordered. Residues 202-217 (EPSKLEVAILDRERPG) are compositionally biased toward basic and acidic residues.

It belongs to the peptidase T1A family. As to quaternary structure, the 20S proteasome core is composed of 14 alpha and 14 beta subunits that assemble into four stacked heptameric rings, resulting in a barrel-shaped structure. The two inner rings, each composed of seven catalytic beta subunits, are sandwiched by two outer rings, each composed of seven alpha subunits. The catalytic chamber with the active sites is on the inside of the barrel. Has a gated structure, the ends of the cylinder being occluded by the N-termini of the alpha-subunits. Is capped by the proteasome-associated ATPase, ARC.

It localises to the cytoplasm. The protein operates within protein degradation; proteasomal Pup-dependent pathway. The formation of the proteasomal ATPase ARC-20S proteasome complex, likely via the docking of the C-termini of ARC into the intersubunit pockets in the alpha-rings, may trigger opening of the gate for substrate entry. Interconversion between the open-gate and close-gate conformations leads to a dynamic regulation of the 20S proteasome proteolysis activity. In terms of biological role, component of the proteasome core, a large protease complex with broad specificity involved in protein degradation. The polypeptide is Proteasome subunit alpha (Saccharomonospora viridis (strain ATCC 15386 / DSM 43017 / JCM 3036 / CCUG 5913 / NBRC 12207 / NCIMB 9602 / P101) (Thermoactinomyces viridis)).